The chain runs to 94 residues: MILETISKQLQEQQESLNKDYRKKLESIKERSDRLESDLKTQFDAQLEKWEQNFKGYEQQLTDILNEREQLDLDQQRLNAQKQALENHMKQREE.

This is an uncharacterized protein from Helicobacter pylori (strain ATCC 700392 / 26695) (Campylobacter pylori).